The sequence spans 249 residues: 2,3-bisphosphoglycerate-dependent phosphoglycerate mutase (249 aa).

Substrate contacts are provided by residues 8-15 (RHGESTWN), 21-22 (TG), Arg60, 87-90 (ERHY), Lys98, 114-115 (RR), and 183-184 (GN). The active-site Tele-phosphohistidine intermediate is His9. The Proton donor/acceptor role is filled by Glu87.

This sequence belongs to the phosphoglycerate mutase family. BPG-dependent PGAM subfamily. In terms of assembly, homodimer.

The catalysed reaction is (2R)-2-phosphoglycerate = (2R)-3-phosphoglycerate. It participates in carbohydrate degradation; glycolysis; pyruvate from D-glyceraldehyde 3-phosphate: step 3/5. Functionally, catalyzes the interconversion of 2-phosphoglycerate and 3-phosphoglycerate. This Azoarcus sp. (strain BH72) protein is 2,3-bisphosphoglycerate-dependent phosphoglycerate mutase.